The sequence spans 422 residues: Probable glycosidase CRR1 (422 aa).

The first 20 residues, 1–20 (MRISILQLVPVVGYIGFALG), serve as a signal peptide directing secretion. The GH16 domain maps to 67–339 (DEESCAPIPA…WENSPDIIEK (273 aa)). The Nucleophile role is filled by glutamate 217. The active-site Proton donor is the glutamate 221.

The protein belongs to the glycosyl hydrolase 16 family. CRR1 subfamily.

The protein localises to the spore wall. In terms of biological role, spore specific glycosidase involved in spore wall assembly during sporulation. May be involved in copper import. The sequence is that of Probable glycosidase CRR1 (CRR1) from Saccharomyces cerevisiae (strain ATCC 204508 / S288c) (Baker's yeast).